Here is a 347-residue protein sequence, read N- to C-terminus: Major capsid protein (347 aa).

This sequence belongs to the T7virus major capsid protein family. As to quaternary structure, homohexamer. Interacts with the connector protein and the minor capsid protein. Interacts with the capsid assembly scaffolding protein; capsid proteins and scaffolding proteins form building blocks that assemble to form the procapsid, each hexamer of the major capsid protein interacting with 2 scaffolding proteins.

Its subcellular location is the virion. In terms of biological role, assembles with the minor capsid protein to form an icosahedral capsid with a T=7 symmetry, about 60 nm in diameter, and consisting of 415 capsid proteins. The major and minor capsid proteins are incorporated into the capsid in about a 90/10 ratio respectively. Once the capsid formed, encapsidates one single copy of the viral genome. The sequence is that of Major capsid protein (10) from Escherichia coli (Bacteriophage T3).